Here is a 349-residue protein sequence, read N- to C-terminus: tRNA pseudouridine synthase D (349 aa).

Phe-27 contacts substrate. The active-site Nucleophile is Asp-80. Substrate is bound at residue Asn-129. One can recognise a TRUD domain in the interval 155-303 (GVPNYFGAQR…VEAARRAMLL (149 aa)). Phe-329 serves as a coordination point for substrate.

Belongs to the pseudouridine synthase TruD family.

It carries out the reaction uridine(13) in tRNA = pseudouridine(13) in tRNA. In terms of biological role, responsible for synthesis of pseudouridine from uracil-13 in transfer RNAs. This is tRNA pseudouridine synthase D from Shigella boydii serotype 18 (strain CDC 3083-94 / BS512).